Here is a 403-residue protein sequence, read N- to C-terminus: Phosphoglycerate kinase (403 aa).

Residues 21 to 23 (DFN), Arg36, 59 to 62 (HLGR), Arg119, and Arg159 each bind substrate. ATP contacts are provided by residues Lys214, Gly301, Glu332, and 359–362 (GGDS).

It belongs to the phosphoglycerate kinase family. As to quaternary structure, monomer.

It localises to the cytoplasm. The catalysed reaction is (2R)-3-phosphoglycerate + ATP = (2R)-3-phospho-glyceroyl phosphate + ADP. It participates in carbohydrate degradation; glycolysis; pyruvate from D-glyceraldehyde 3-phosphate: step 2/5. The chain is Phosphoglycerate kinase from Lactobacillus helveticus (strain DPC 4571).